The primary structure comprises 278 residues: Large ribosomal subunit protein uL24m (278 aa).

Residues Phe109 to Asp142 form the KOW domain.

This sequence belongs to the universal ribosomal protein uL24 family.

The protein resides in the mitochondrion. The protein is Large ribosomal subunit protein uL24m (mrpl-24) of Caenorhabditis elegans.